Reading from the N-terminus, the 635-residue chain is Sodium- and chloride-dependent creatine transporter 1 (635 aa).

The interval 1–35 (MAKKSAENGIYSVSGDEKKGPLIAPGPDGAPAKGD) is disordered. The Cytoplasmic segment spans residues 1–60 (MAKKSAENGIYSVSGDEKKGPLIAPGPDGAPAKGDGPAGLGAPGGCLAVPPRETWTRQMD). A compositionally biased stretch (low complexity) spans 25–35 (PGPDGAPAKGD). Residues 61 to 81 (FIMSCVGFAVGLGNVWRFPYL) traverse the membrane as a helical segment. At 82–87 (CYKNGG) the chain is on the extracellular side. Residues 88 to 108 (GVFLIPYVLIALVGGIPIFFL) form a helical membrane-spanning segment. At 109–138 (EISLGQFMKAGSINVWNICPLFKGLGYASM) the chain is on the cytoplasmic side. A helical membrane pass occupies residues 139 to 159 (VIVFYCNTYYIMVLAWGFYYL). At 160-230 (VKSFTTTLPW…LSGGLEVPGA (71 aa)) the chain is on the extracellular side. N-linked (GlcNAc...) asparagine glycans are attached at residues asparagine 192 and asparagine 197. Residues 231–251 (LNSEVTLCLLACWVLVYFCVW) traverse the membrane as a helical segment. Residues 252–269 (KGVKSTGKIVYFTATFPY) lie on the Cytoplasmic side of the membrane. The helical transmembrane segment at 270–290 (VVLVVLLVRGVLLPGALDGII) threads the bilayer. At 291–304 (YYLKPDWSKLRSPQ) the chain is on the extracellular side. A helical membrane pass occupies residues 305 to 325 (VWIDAGTQIFFSYAIGLGALT). The Cytoplasmic segment spans residues 326–341 (ALGSYNRFNNNCYKDA). The chain crosses the membrane as a helical span at residues 342-362 (IILALINSGTSFFAGFVVFSI). At 363–394 (LGFMATEQGVHISKVAESGPGLAFIAYPRAVT) the chain is on the extracellular side. The helical transmembrane segment at 395–415 (LMPVAPLWAALFFFMLLLLGL) threads the bilayer. The Cytoplasmic portion of the chain corresponds to 416–444 (DSQFVGVEGFITGLLDLLPASYYFRFQRE). A helical transmembrane segment spans residues 445-465 (ISVALCCALCFVIDLSMVQMA). Over 466–479 (GMYVFQLFDYYSAS) the chain is Extracellular. A helical transmembrane segment spans residues 480 to 500 (GTTLLWQAFWECVAVAWVYGA). Topologically, residues 501 to 520 (DRFMDDIACMIGYRPCPWMK) are cytoplasmic. Residues 521–541 (WCWSFFTPLVCMGIFIFNIVY) traverse the membrane as a helical segment. At 542-560 (YKPLVYNKTYVYPWWGEAM) the chain is on the extracellular side. N-linked (GlcNAc...) asparagine glycosylation occurs at asparagine 548. Residues 561–581 (GWAFALSSMLCVPLHLLGCLL) form a helical membrane-spanning segment. The Cytoplasmic portion of the chain corresponds to 582–635 (RAKGTMAERWQHLTQPVWGLHHLEYRAQDADVRGLTTLTPVSESSKVVVVESVM). Threonine 617 and threonine 620 each carry phosphothreonine. The residue at position 623 (serine 623) is a Phosphoserine.

It belongs to the sodium:neurotransmitter symporter (SNF) (TC 2.A.22) family. SLC6A8 subfamily. Post-translationally, glycosylated. As to expression, prominent in kidney, heart, and muscle, also present in brain, but not in liver and intestine.

It is found in the cell membrane. The protein localises to the apical cell membrane. It carries out the reaction creatine(out) + chloride(out) + 2 Na(+)(out) = creatine(in) + chloride(in) + 2 Na(+)(in). Creatine:sodium symporter which mediates the uptake of creatine. Plays an important role in supplying creatine to the brain via the blood-brain barrier. The protein is Sodium- and chloride-dependent creatine transporter 1 (SLC6A8) of Oryctolagus cuniculus (Rabbit).